Consider the following 148-residue polypeptide: Protein SOB FIVE-LIKE 1 (148 aa).

Positions M1–S10 are enriched in basic and acidic residues. 2 disordered regions span residues M1–S20 and N33–K148. The short motif at S20 to Y25 is the SOFL-A element. Acidic residues predominate over residues D54–M76. The short motif at S75–P84 is the SOFL-B element. A compositionally biased stretch (basic residues) spans H91 to G101. The segment covering Q111 to A128 has biased composition (basic and acidic residues).

It belongs to the SOFL plant protein family. Predominantly expressed in the vascular tissues of seedlings, developing leaves, flowers and siliques, but barely detectable in roots and stems.

It localises to the cytoplasm. The protein resides in the nucleus. Functionally, involved in cytokinin-mediated development. Together with SOFL2, triggers the endogenous content of specific bioactive cytokinins derived from the biosynthetic intermediates trans-zeatin riboside monophosphate (tZRMP) and N(6)-(Delta(2)-isopentenyl)adenosine monophosphate (iPRMP) such as N-glucosides trans-zeatin 7-glucoside (tZ7G), cis-zeatin 7-glucoside (cZ7G) and N(6)-(Delta(2)-isopentenyl)adenine 7-glucoside (iP7G). The chain is Protein SOB FIVE-LIKE 1 from Arabidopsis thaliana (Mouse-ear cress).